We begin with the raw amino-acid sequence, 368 residues long: E3 ubiquitin-protein ligase E3D (368 aa).

Residue A2 is modified to N-acetylalanine. Positions 129-159 match the BRAT1-like motif motif; that stretch reads PLPSENWSALVGEWCCHPDPFANRPLHPREN. C144 is a Zn(2+) binding site. Residues 214 to 236 form an interaction with UBE2C region; sequence RPSEGSFPNIPRSQFLQSIIAQC. Positions 332–368 are HECT-like; it reads LPSATCLELLLILSRNNASLPLSLRQMNSFQVAFLKM.

As to quaternary structure, interacts with UBE2C/UbcH10 (E2 ubiquitin-conjugating enzyme). In vitro, interacts with cyclin-B. Ubiquitinated by UBCH10 (E2 ubiquitin-conjugating enzyme).

Its subcellular location is the cytoplasm. The catalysed reaction is S-ubiquitinyl-[E2 ubiquitin-conjugating enzyme]-L-cysteine + [acceptor protein]-L-lysine = [E2 ubiquitin-conjugating enzyme]-L-cysteine + N(6)-ubiquitinyl-[acceptor protein]-L-lysine.. Its pathway is protein modification; protein ubiquitination. In terms of biological role, E3 ubiquitin-protein ligase which accepts ubiquitin from specific E2 ubiquitin-conjugating enzymes, and transfers it to substrates, generally promoting their degradation by the proteasome. Independently of its E3 ubiquitin-protein ligase activity, acts as an inhibitor of CPSF3 endonuclease activity by blocking CPSF3 active site. This chain is E3 ubiquitin-protein ligase E3D (Ube3d), found in Mus musculus (Mouse).